Reading from the N-terminus, the 177-residue chain is Large ribosomal subunit protein uL5 (177 aa).

Belongs to the universal ribosomal protein uL5 family. Part of the 50S ribosomal subunit. Interacts with protein L18 and the 5S rRNA, and probably with tRNAs. Forms a bridge to the 30S subunit in the 70S ribosome.

Its function is as follows. This is 1 of 5 proteins that mediates the attachment of the 5S rRNA onto the large ribosomal subunit, stabilizing the orientation of adjacent RNA domains. Forms part of the central protuberance. Modeling places the A and P site tRNAs in close proximity to this protein; the 5S rRNA and some of its associated proteins might help stabilize positioning of ribosome-bound tRNAs. In the 70S ribosome it is thought to contact protein S13 of the 30S subunit (bridge B1b), connecting the 2 subunits; this bridge is implicated in subunit movement. This chain is Large ribosomal subunit protein uL5 (rpl5), found in Haloarcula marismortui (strain ATCC 43049 / DSM 3752 / JCM 8966 / VKM B-1809) (Halobacterium marismortui).